The chain runs to 695 residues: Elongation factor G (695 aa).

The 275-residue stretch at 8–282 (EKTRNIGIMA…AVLDYLPAPT (275 aa)) folds into the tr-type G domain. Residues 17-24 (AHIDAGKT), 81-85 (DTPGH), and 135-138 (NKMD) each bind GTP.

The protein belongs to the TRAFAC class translation factor GTPase superfamily. Classic translation factor GTPase family. EF-G/EF-2 subfamily.

Its subcellular location is the cytoplasm. Catalyzes the GTP-dependent ribosomal translocation step during translation elongation. During this step, the ribosome changes from the pre-translocational (PRE) to the post-translocational (POST) state as the newly formed A-site-bound peptidyl-tRNA and P-site-bound deacylated tRNA move to the P and E sites, respectively. Catalyzes the coordinated movement of the two tRNA molecules, the mRNA and conformational changes in the ribosome. The sequence is that of Elongation factor G from Listeria innocua serovar 6a (strain ATCC BAA-680 / CLIP 11262).